We begin with the raw amino-acid sequence, 233 residues long: Putative nosiheptide resistance regulatory protein (233 aa).

Positions 93–112 (RKAARQAADYSRPMIEQAVA) form a DNA-binding region, H-T-H motif. The disordered stretch occupies residues 190–233 (PPEATEVPESGRLTSVDGSAEAVLDPEVQAKEAAEEAAKRDDQA). The span at 217–233 (VQAKEAAEEAAKRDDQA) shows a compositional bias: basic and acidic residues.

In terms of biological role, seems to be involved in the regulation of nhs expression. This Streptomyces actuosus protein is Putative nosiheptide resistance regulatory protein.